Reading from the N-terminus, the 215-residue chain is Pyrrolidone-carboxylate peptidase 1 (215 aa).

Catalysis depends on residues E80, C143, and H167.

This sequence belongs to the peptidase C15 family. As to quaternary structure, homotetramer.

Its subcellular location is the cytoplasm. The enzyme catalyses Release of an N-terminal pyroglutamyl group from a polypeptide, the second amino acid generally not being Pro.. In terms of biological role, removes 5-oxoproline from various penultimate amino acid residues except L-proline. The protein is Pyrrolidone-carboxylate peptidase 1 of Ralstonia nicotianae (strain ATCC BAA-1114 / GMI1000) (Ralstonia solanacearum).